Reading from the N-terminus, the 505-residue chain is Prenylcysteine oxidase 1 (505 aa).

A signal peptide spans 1–28 (MGRFAAALVGSLFWLGLLLCGLGSLASA). Residues asparagine 196, asparagine 323, and asparagine 353 are each glycosylated (N-linked (GlcNAc...) asparagine).

It belongs to the prenylcysteine oxidase family. FAD is required as a cofactor. Highly expressed in the liver, kidney, heart and brain.

It localises to the lysosome. The catalysed reaction is an S-polyprenyl-L-cysteine + O2 + H2O = a polyprenal + L-cysteine + H2O2. It catalyses the reaction S-(2E,6E)-farnesyl-L-cysteine + O2 + H2O = (2E,6E)-farnesal + L-cysteine + H2O2. The enzyme catalyses [(2E,6E,10E)-geranylgeranyl]-L-cysteine + O2 + H2O = (2E,6E,10E)-geranylgeranial + L-cysteine + H2O2. In terms of biological role, prenylcysteine oxidase that cleaves the thioether bond of prenyl-L-cysteines, such as farnesylcysteine and geranylgeranylcysteine. Only active against free prenylcysteines and not prenylcysteine residues within prenylated proteins or peptides. Involved in the final step in the degradation of prenylated proteins, by degrading prenylcysteines after the protein has been degraded. The chain is Prenylcysteine oxidase 1 from Mus musculus (Mouse).